The primary structure comprises 1467 residues: MDVLEMLRASASGSYNTIFSDAWCQYVSKQITATMYMYCAFGLMGVLFLAWFMYFKRLARLRLRDELARSISSVTNSYGDLRGLRFRKRDKMLFYGRRMLRKMKNVSGQMYSSGKGYKRRAVMRFARRILQLRRDNMPLEMRTVEPPAEYLEETIEGSDRVPPDALYMLQSIRIFGHFEKPIFLRLCKHTQLLELMAGDYLFKITDPDDSVYIVQSGMINVYISNADGSTLSLKTVRKGESVTSLLSFIDVLSGNPSYYKTVTAKAIEKSVVIRLPMQAFEEVFQDNPDVMIRVIQVIMIRLQRVLFTALRNYLGLNAELVQNHMRYKSVSTMSGPINSQTSQSSRQATANGPPMVINQLNLMQSAASGLGMGMGTGTGSGVSVTVTRPPPSPSRHSREEHTLSDPNPNPDGSVHGTSNLFTEVHGDAPNADLFHQQQQSVGNLSTRRSSITQMTPDGSHTCPQAPGVTTSIDMRLVQSSAVDSLRKELGLSEEDAHIIEPFVELRELEPNVTLITEGNADDVCVWFVMTGTLAVYQSNQDATRAKQDKNDMLIHFVHPGEIVGGLAMLTGEASAYTIRSRSNSRIAFIRRAAIYQIMRQRPRIVLDLGNGVVRRLSPLVRQCDYALDWIFLESGRAVYRQDESSDSTYIVLSGRMRSVITHPGGKKEIVGEYGKGDLVGIVEMITETSRTTTVMAVRDSELAKLPEGLFNAIKLRYPIVVTKLISFLSHRFLGSMQTRSGSGAPGAPVEANPVTHKYSTVALVPITDEVPLTPFTYELYHSLCAIGPVLRLTSDVVRKQLGPNIFEAANEYRLTSWLAQQEDRNIITLYQCDSSLSAWTQRCMRQADVILIVGLGDRSHLVGKFEREIDRLAMRTQKELVLLYPEATNAKPANTLSWLNARPWVTKHHHVLCVKRIFTRKSQYRINDLYSRVLLSEPNMHSDFSRLARWLTGNSIGLVLGGGGARGAAHIGMLKAIQEAGIPVDMVGGVSIGALMGALWCSERNITTVTQKAREWSKKMTKWFLQLLDLTYPITSMFSGREFNKTIHDTFGDVSIEDLWIPYFTLTTDITASCHRIHTNGSLWRYVRSSMSLSGYMPPLCDPKDGHLLLDGGYVNNLPGHLWRYCRASMSIAGVFPPFCDYRDGHLLLDGCYTNNVPADVMHNLGAAHIIAIDVGSQDDTDLTNYGDDLSGWWLLYKKWNPFTSPVKVPDLPDIQSRLAYVSCVRQLEEVKNSDYCEYIRPPIDKYKTLAFGSFDEIRDVGYVFGKNYFENMAKAGRLGRFNQWFNKEPPKRVNHASLNEYTFIDLAQIVCRLPETYAVNTAELFSEDEDCDGYISEPTTLNTDRRRIQVPRAGNSLSFSETEMDSDVELDLKLERKMDKSTQSTPPTSSRASVRGKEEARHMDNWHWSVKHKVETASGATEATNAMIDQEQQHQQQADQGVGAEQLADKDEDKENRSSTYNETKN.

At 1–34 (MDVLEMLRASASGSYNTIFSDAWCQYVSKQITAT) the chain is on the lumenal side. A helical membrane pass occupies residues 35 to 55 (MYMYCAFGLMGVLFLAWFMYF). The Cytoplasmic portion of the chain corresponds to 56–1467 (KRLARLRLRD…RSSTYNETKN (1412 aa)). A nucleoside 3',5'-cyclic phosphate is bound at residue 174-301 (IFGHFEKPIF…IRVIQVIMIR (128 aa)). 2 disordered regions span residues 332-353 (TMSGPINSQTSQSSRQATANGP) and 372-416 (MGMG…SVHG). Residues 339–350 (SQTSQSSRQATA) are compositionally biased toward low complexity. 2 positions are modified to phosphoserine: S450 and S459. A nucleoside 3',5'-cyclic phosphate contacts are provided by residues 488-615 (ELGL…VVRR) and 604-731 (IVLD…LSHR). Residues 958 to 1124 (LVLGGGGARG…VNNLPGHLWR (167 aa)) enclose the PNPLA domain. The GXGXXG signature appears at 962-967 (GGGARG). The GXSXG signature appears at 989–993 (GVSIG). S991 acts as the Nucleophile in catalysis. The active-site Proton acceptor is the D1111. Residues 1111–1113 (DGG) carry the DGA/G motif. S1205 carries the phosphoserine modification. The interval 1377–1467 (RKMDKSTQST…RSSTYNETKN (91 aa)) is disordered. Residues 1382 to 1393 (STQSTPPTSSRA) show a composition bias toward polar residues. Composition is skewed to basic and acidic residues over residues 1396 to 1406 (RGKEEARHMDN) and 1448 to 1458 (LADKDEDKENR).

The protein belongs to the NTE family. As to quaternary structure, interacts with Pka-C3; interaction inhibits the catalytic function of Pka-C3 and the esterase activity of sws.

Its subcellular location is the endoplasmic reticulum membrane. The catalysed reaction is a 1-acyl-sn-glycero-3-phosphocholine + H2O = sn-glycerol 3-phosphocholine + a fatty acid + H(+). Its function is as follows. Phospholipase B that deacylates intracellular phosphatidylcholine (PtdCho), generating glycerophosphocholine (GroPtdCho). This deacylation occurs at both sn-2 and sn-1 positions of PtdCho. Its specific chemical modification by certain organophosphorus (OP) compounds leads to distal axonopathy. Plays a role in the signaling mechanism between neurons and glia that regulates glia wrapping during development of the adult brain. Essential for membrane lipid homeostasis and cell survival in both neurons and glia of the adult brain. This is Neuropathy target esterase sws from Drosophila yakuba (Fruit fly).